A 267-amino-acid chain; its full sequence is Acetyl-coenzyme A carboxylase carboxyl transferase subunit beta 1 (267 aa).

The 259-residue stretch at 9–267 (TWQACPKCGR…NYGIGRSAHG (259 aa)) folds into the CoA carboxyltransferase N-terminal domain. Positions 13, 16, 31, and 34 each coordinate Zn(2+). Residues 13 to 34 (CPKCGRHVHQRQWGTYQQCPYC) form a C4-type zinc finger.

Belongs to the AccD/PCCB family. In terms of assembly, acetyl-CoA carboxylase is a heterohexamer composed of biotin carboxyl carrier protein (AccB), biotin carboxylase (AccC) and two subunits each of ACCase subunit alpha (AccA) and ACCase subunit beta (AccD). The cofactor is Zn(2+).

Its subcellular location is the cytoplasm. The catalysed reaction is N(6)-carboxybiotinyl-L-lysyl-[protein] + acetyl-CoA = N(6)-biotinyl-L-lysyl-[protein] + malonyl-CoA. It participates in lipid metabolism; malonyl-CoA biosynthesis; malonyl-CoA from acetyl-CoA: step 1/1. In terms of biological role, component of the acetyl coenzyme A carboxylase (ACC) complex. Biotin carboxylase (BC) catalyzes the carboxylation of biotin on its carrier protein (BCCP) and then the CO(2) group is transferred by the transcarboxylase to acetyl-CoA to form malonyl-CoA. This chain is Acetyl-coenzyme A carboxylase carboxyl transferase subunit beta 1, found in Lactiplantibacillus plantarum (strain ATCC BAA-793 / NCIMB 8826 / WCFS1) (Lactobacillus plantarum).